A 292-amino-acid chain; its full sequence is E3 ubiquitin-protein ligase trim-21 (292 aa).

The segment at 6-52 (CEICDDDFSSEEDGDHNPRNLKCSHTLCEGCIKKLLKNGRVVCPFCR) adopts an RING-type zinc-finger fold. The B box-type zinc-finger motif lies at 90-137 (NFPPKCVEHPYNVAEFACIESNCSSKNKLMCQTCEEFGAHKGHAKELL). Zn(2+)-binding residues include C95, H98, C123, and H129. A coiled-coil region spans residues 152–179 (INQLKLNIQNCTVKKNELEEAVVKSEQL).

The protein belongs to the TRIM/RBCC family. In terms of assembly, interacts with E2 ubiquitin-conjugating enzyme ubc-21. Interacts with ced-6; this mediates interaction of trim-21 with ced-1 and is required for ced-1 ubiquitination. Interacts with nck-1; the interaction is required for ced-1 ubiquitination. In early larva, observed mainly in pharyngeal and body wall muscle cells.

The protein localises to the cytoplasm. The catalysed reaction is S-ubiquitinyl-[E2 ubiquitin-conjugating enzyme]-L-cysteine + [acceptor protein]-L-lysine = [E2 ubiquitin-conjugating enzyme]-L-cysteine + N(6)-ubiquitinyl-[acceptor protein]-L-lysine.. Its pathway is protein modification; protein ubiquitination. E3 ubiquitin-protein ligase which catalyzes 'Lys-48'-linked polyubiquitination of ced-1, promoting its proteasomal degradation to maintain appropriate ced-1 levels for apoptotic cell clearance. Acts together with E2 ubiquitin-conjugating enzyme ubc-21. The chain is E3 ubiquitin-protein ligase trim-21 from Caenorhabditis elegans.